A 437-amino-acid polypeptide reads, in one-letter code: Ribosomal protein uS12 methylthiotransferase RimO (437 aa).

The MTTase N-terminal domain occupies Pro9–Cys125. Residues Cys18, Cys54, Cys88, Cys149, Cys153, and Cys156 each coordinate [4Fe-4S] cluster. The Radical SAM core domain maps to Leu135–Ser364. The TRAM domain occupies Arg367–Ser434.

This sequence belongs to the methylthiotransferase family. RimO subfamily. [4Fe-4S] cluster is required as a cofactor.

It is found in the cytoplasm. The enzyme catalyses L-aspartate(89)-[ribosomal protein uS12]-hydrogen + (sulfur carrier)-SH + AH2 + 2 S-adenosyl-L-methionine = 3-methylsulfanyl-L-aspartate(89)-[ribosomal protein uS12]-hydrogen + (sulfur carrier)-H + 5'-deoxyadenosine + L-methionine + A + S-adenosyl-L-homocysteine + 2 H(+). Its function is as follows. Catalyzes the methylthiolation of an aspartic acid residue of ribosomal protein uS12. This chain is Ribosomal protein uS12 methylthiotransferase RimO, found in Chlorobaculum parvum (strain DSM 263 / NCIMB 8327) (Chlorobium vibrioforme subsp. thiosulfatophilum).